The following is a 198-amino-acid chain: Recombination protein RecR (198 aa).

Residues 57 to 72 (CSICGNLTESDPCAIC) form a C4-type zinc finger. The Toprim domain occupies 80 to 175 (TTILVVEESK…KVTRLAHGLA (96 aa)).

It belongs to the RecR family.

Its function is as follows. May play a role in DNA repair. It seems to be involved in an RecBC-independent recombinational process of DNA repair. It may act with RecF and RecO. The protein is Recombination protein RecR of Lactococcus lactis subsp. cremoris (strain SK11).